The sequence spans 818 residues: G-type lectin S-receptor-like serine/threonine-protein kinase At1g67520 (818 aa).

Residues 1–22 form the signal peptide; it reads MCSNGIFVSLLTLSLLLGKSCS. Topologically, residues 23 to 387 are extracellular; it reads ETDTLHQGQF…NENKKVAAWH (365 aa). Residues 24–149 form the Bulb-type lectin domain; that stretch reads TDTLHQGQFL…DADGSMKRVL (126 aa). N-linked (GlcNAc...) asparagine glycans are attached at residues N123, N199, and N337. In terms of domain architecture, PAN spans 290–379; the sequence is CLAAGYVVRD…PRTIYIRGNE (90 aa). Cystine bridges form between C330/C353 and C334/C340. Residues 388 to 408 traverse the membrane as a helical segment; it reads IVVATLFLMTPIIWFIIYLVL. Residues 409–818 are Cytoplasmic-facing; sequence RKFNVKGRNC…SITITVLEAR (410 aa). The 290-residue stretch at 496 to 785 folds into the Protein kinase domain; that stretch reads FSDENKLGEG…ALSLPKEPAF (290 aa). ATP contacts are provided by residues 502 to 510 and K524; that span reads LGEGGFGPV. S530 carries the phosphoserine modification. Residues 585 to 602 are caM-binding; it reads LRKNVLDWTLRFRIMEGI. D621 serves as the catalytic Proton acceptor. Residues S625 and S638 each carry the phosphoserine modification. Residue T655 is modified to Phosphothreonine. Residues S699 and S807 each carry the phosphoserine modification. T813 carries the phosphothreonine modification.

This sequence belongs to the protein kinase superfamily. Ser/Thr protein kinase family.

The protein localises to the cell membrane. It catalyses the reaction L-seryl-[protein] + ATP = O-phospho-L-seryl-[protein] + ADP + H(+). It carries out the reaction L-threonyl-[protein] + ATP = O-phospho-L-threonyl-[protein] + ADP + H(+). The chain is G-type lectin S-receptor-like serine/threonine-protein kinase At1g67520 from Arabidopsis thaliana (Mouse-ear cress).